The primary structure comprises 158 residues: NAD(P)H-quinone oxidoreductase subunit O, chloroplastic (158 aa).

The N-terminal 38 residues, 1 to 38 (MAFSATVSQLSSLSTISSSLPISSRRLPHRSLPQFTVK), are a transit peptide targeting the chloroplast. The interval 33–70 (PQFTVKAEAEKEKQSTQGKSDGEASPAATKTPKTLPKK) is disordered. The span at 56 to 70 (ASPAATKTPKTLPKK) shows a compositional bias: low complexity.

It belongs to the NDH complex subunit O family. Part of the chloroplast NDH complex, composed of a mixture of chloroplast and nucleus encoded subunits. Component of the NDH subcomplex A, at least composed of ndhH, ndhI, ndhJ, ndhK, ndhL, ndhM, ndhN and ndhO.

It is found in the plastid. The protein resides in the chloroplast thylakoid membrane. It catalyses the reaction a plastoquinone + NADH + (n+1) H(+)(in) = a plastoquinol + NAD(+) + n H(+)(out). The enzyme catalyses a plastoquinone + NADPH + (n+1) H(+)(in) = a plastoquinol + NADP(+) + n H(+)(out). In terms of biological role, NDH shuttles electrons from NAD(P)H:plastoquinone, via FMN and iron-sulfur (Fe-S) centers, to quinones in the photosynthetic chain and possibly in a chloroplast respiratory chain. The immediate electron acceptor for the enzyme in this species is believed to be plastoquinone. Couples the redox reaction to proton translocation, and thus conserves the redox energy in a proton gradient. In Arabidopsis thaliana (Mouse-ear cress), this protein is NAD(P)H-quinone oxidoreductase subunit O, chloroplastic.